The sequence spans 369 residues: Deoxyhypusine synthase (369 aa).

At S78 the chain carries Phosphoserine. NAD(+) contacts are provided by residues 105–109, 131–133, E137, and D238; these read SNLIS and TAG. 136–137 contacts spermidine; that stretch reads EE. D243 is a binding site for spermidine. G283 contributes to the NAD(+) binding site. Spermidine is bound at residue H288. 308–309 contributes to the NAD(+) binding site; sequence TA. Residues 314-316 and 323-329 each bind spermidine; these read GSD and EAVSWGK. K329 (nucleophile) is an active-site residue. 342 to 343 lines the NAD(+) pocket; that stretch reads DA.

Belongs to the deoxyhypusine synthase family. In terms of assembly, homotetramer formed by a dimer of dimers. NAD(+) is required as a cofactor.

It carries out the reaction [eIF5A protein]-L-lysine + spermidine = [eIF5A protein]-deoxyhypusine + propane-1,3-diamine. It functions in the pathway protein modification; eIF5A hypusination. Catalyzes the NAD-dependent oxidative cleavage of spermidine and the subsequent transfer of the butylamine moiety of spermidine to the epsilon-amino group of a critical lysine residue of the eIF-5A precursor protein to form the intermediate deoxyhypusine residue. This is the first step of the post-translational modification of that lysine into an unusual amino acid residue named hypusine. Hypusination is unique to mature eIF-5A factor and is essential for its function. The polypeptide is Deoxyhypusine synthase (DHPS) (Homo sapiens (Human)).